Reading from the N-terminus, the 199-residue chain is Interferon kappa (199 aa).

The N-terminal stretch at 1-21 (MTPKFLWLVALVALYIPPIQS) is a signal peptide. Intrachain disulfides connect cysteine 24–cysteine 119 and cysteine 49–cysteine 162.

The protein belongs to the alpha/beta interferon family. As to expression, expressed at low levels in peritoneal macrophages.

It is found in the secreted. May play a role in the regulation of immune cell function. The sequence is that of Interferon kappa (Ifnk) from Mus musculus (Mouse).